The primary structure comprises 438 residues: Aspartate--tRNA(Asp/Asn) ligase (438 aa).

E176 contributes to the L-aspartate binding site. The aspartate stretch occupies residues 198-201; the sequence is QLYK. R220 provides a ligand contact to L-aspartate. Residues 220 to 222, 228 to 230, and E361 contribute to the ATP site; these read RAE and RHL. Residues E361 and S364 each coordinate Mg(2+). L-aspartate is bound by residues S364 and R368. 409-412 provides a ligand contact to ATP; sequence GADR.

Belongs to the class-II aminoacyl-tRNA synthetase family. Type 2 subfamily. Homodimer. It depends on Mg(2+) as a cofactor.

The protein resides in the cytoplasm. The enzyme catalyses tRNA(Asx) + L-aspartate + ATP = L-aspartyl-tRNA(Asx) + AMP + diphosphate. Aspartyl-tRNA synthetase with relaxed tRNA specificity since it is able to aspartylate not only its cognate tRNA(Asp) but also tRNA(Asn). Reaction proceeds in two steps: L-aspartate is first activated by ATP to form Asp-AMP and then transferred to the acceptor end of tRNA(Asp/Asn). The polypeptide is Aspartate--tRNA(Asp/Asn) ligase (Methanococcus maripaludis (strain C6 / ATCC BAA-1332)).